A 152-amino-acid chain; its full sequence is 3-hydroxyacyl-[acyl-carrier-protein] dehydratase FabZ (152 aa).

The active site involves H57.

Belongs to the thioester dehydratase family. FabZ subfamily.

It localises to the cytoplasm. The catalysed reaction is a (3R)-hydroxyacyl-[ACP] = a (2E)-enoyl-[ACP] + H2O. Functionally, involved in unsaturated fatty acids biosynthesis. Catalyzes the dehydration of short chain beta-hydroxyacyl-ACPs and long chain saturated and unsaturated beta-hydroxyacyl-ACPs. In Xanthomonas axonopodis pv. citri (strain 306), this protein is 3-hydroxyacyl-[acyl-carrier-protein] dehydratase FabZ.